The chain runs to 246 residues: Ubiquinone biosynthesis O-methyltransferase (246 aa).

Positions 44, 63, 84, and 128 each coordinate S-adenosyl-L-methionine.

This sequence belongs to the methyltransferase superfamily. UbiG/COQ3 family.

It catalyses the reaction a 3-demethylubiquinol + S-adenosyl-L-methionine = a ubiquinol + S-adenosyl-L-homocysteine + H(+). It carries out the reaction a 3-(all-trans-polyprenyl)benzene-1,2-diol + S-adenosyl-L-methionine = a 2-methoxy-6-(all-trans-polyprenyl)phenol + S-adenosyl-L-homocysteine + H(+). It functions in the pathway cofactor biosynthesis; ubiquinone biosynthesis. In terms of biological role, O-methyltransferase that catalyzes the 2 O-methylation steps in the ubiquinone biosynthetic pathway. This Xylella fastidiosa (strain 9a5c) protein is Ubiquinone biosynthesis O-methyltransferase.